Reading from the N-terminus, the 181-residue chain is ADP-ribosylation factor 1-like 2 (181 aa).

A lipid anchor (N-myristoyl glycine) is attached at Gly-2. Positions 3-16 (NVFGSLFKGLFGKK) are important for the stable binding to the membranes. GTP is bound by residues 24-32 (GLDAAGKTT), 126-129 (NKQD), and Ala-160.

This sequence belongs to the small GTPase superfamily. Arf family.

The protein resides in the golgi apparatus membrane. The enzyme catalyses GTP + H2O = GDP + phosphate + H(+). Alternates between an inactive GDP-bound form and an active GTP-bound form. Activated by a guanine nucleotide-exchange factor (GEF) and inactivated by GTPase-activating protein (GAP). In terms of biological role, small GTPase involved in protein trafficking between different compartments. Modulates vesicle budding and uncoating within the Golgi complex. In its GTP-bound form, triggers the recruitment of coatomer proteins to the Golgi membrane. The hydrolysis of ARF1-bound GTP, which is mediated by ARFGAPs proteins, is required for dissociation of coat proteins from Golgi membranes and vesicles. Involved in endoplasmic reticulum dynamics during embryogenesis. Also required for adult germline function. Plays a role in cell shedding during embryogenesis probably by promoting the endocytosis of cell adhesion molecules. During neurogenesis, involved in cell autonomous Q.p neuroblast asymmetric divisions that generate one precursor cell and one apoptotic cell, probably by controlling endocytosis. Plays a role in maintaining mitochondrial morphology. This Caenorhabditis briggsae protein is ADP-ribosylation factor 1-like 2 (arf-1.2).